Reading from the N-terminus, the 117-residue chain is Non-specific lipid-transfer protein 1 (117 aa).

Residues 1–26 form the signal peptide; that stretch reads MARAQVLLMAAALVLMLTAAPRAAVA. Cystine bridges form between Cys-29/Cys-76, Cys-39/Cys-53, Cys-54/Cys-99, and Cys-74/Cys-113. Asp-33 carries the Cis-14-hydroxy-10,13-dioxo-7-heptadecenoic acid aspartate ester lipid modification.

The protein belongs to the plant LTP family. Aleurone layer of developing and germinating seeds.

Its function is as follows. Plant non-specific lipid-transfer proteins transfer phospholipids as well as galactolipids across membranes. May play a role in wax or cutin deposition in the cell walls of expanding epidermal cells and certain secretory tissues. The sequence is that of Non-specific lipid-transfer protein 1 (LTP1) from Hordeum vulgare (Barley).